The sequence spans 863 residues: Potassium/sodium hyperpolarization-activated cyclic nucleotide-gated channel 2 (863 aa).

Residues 1–10 (MDARGGGGRP) are compositionally biased toward gly residues. The interval 1 to 131 (MDARGGGGRP…AGPAGEPRGS (131 aa)) is disordered. Over 1 to 188 (MDARGGGGRP…PYSDFRFYWD (188 aa)) the chain is Cytoplasmic. Pro residues predominate over residues 17–47 (TPAPGPPPPPPPPAPPQPQPPPAPPPNPTTP). Low complexity predominate over residues 106–128 (GAASGPAAAEEAGSEEAGPAGEP). Phosphoserine is present on residues Ser-119 and Ser-134. Residues 131-182 (SQASFLQRQFGALLQPGVNKFSLRMFGSQKAVEREQERVKSAGAWIIHPYSD) are involved in subunit assembly. A helical transmembrane segment spans residues 189 to 209 (FTMLLFMVGNLIIIPVGITFF). Residues 210–213 (KDET) are Extracellular-facing. Residues 214–234 (TAPWIVFNVVSDTFFLMDLVL) traverse the membrane as a helical segment. At 235-261 (NFRTGIVIEDNTEIILDPEKIKKKYLR) the chain is on the cytoplasmic side. Residues 262 to 282 (TWFVVDFVSSIPVDYIFLIVE) traverse the membrane as a helical segment. At 283–290 (KGIDSEVY) the chain is on the extracellular side. The chain crosses the membrane as a helical; Voltage-sensor span at residues 291-311 (KTARALRIVRFTKILSLLRLL). Over 312-342 (RLSRLIRYIHQWEEIFHMTYDLASAVMRICN) the chain is Cytoplasmic. The chain crosses the membrane as a helical span at residues 343–363 (LISMMLLLCHWDGCLQFLVPM). Topologically, residues 364–386 (LQDFPSDCWVSINNMVNHSWSEL) are extracellular. Residue Asn-380 is glycosylated (N-linked (GlcNAc...) asparagine). An intramembrane region (pore-forming) is located at residues 387–408 (YSFALFKAMSHMLCIGYGRQAP). The Extracellular portion of the chain corresponds to 409-413 (ESMTD). A helical membrane pass occupies residues 414–434 (IWLTMLSMIVGATCYAMFIGH). Residues 435–863 (ATALIQSLDS…SARSRLSSNL (429 aa)) lie on the Cytoplasmic side of the membrane. Gly-581, Glu-582, Cys-584, Arg-591, Thr-592, and Arg-632 together coordinate 3',5'-cyclic AMP. Ser-641 bears the Phosphoserine; by PKG/PRKG2 mark. Ser-726 carries the phosphoserine modification. Arg-728 is modified (omega-N-methylarginine). The tract at residues 730 to 863 (VRRAPPGPLP…SARSRLSSNL (134 aa)) is disordered. The segment covering 734–755 (PPGPLPPAASPGPPAASPPAAP) has biased composition (pro residues). Phosphoserine occurs at positions 743, 750, and 757. 2 stretches are compositionally biased toward low complexity: residues 756-765 (SSPRAPRTSP) and 778-834 (PALP…AAPS). Phosphoserine is present on residues Ser-840, Ser-842, and Ser-847.

The protein belongs to the potassium channel HCN family. Homotetramer. The channel is composed of a homo- or heterotetrameric complex of pore-forming subunits. Heterotetramer with HCN1. Forms an obligate 4:4 complex with accessory subunit PEX5L. Interacts with KCNE2. Post-translationally, phosphorylation at Ser-641 by PRKG2 shifts the voltage-dependence to more negative voltages, hence counteracting the stimulatory effect of cGMP on gating. N-glycosylated; required for cell surface trafficking of HCN2. In terms of processing, S-palmitoylated. Highly expressed in neonatal and adult ventricle and in brain. Highly expressed in the pyramidal layer in hippocampus, in anterior dorsal nucleus in thalamus, in the mammillary nucleus in hypothalamus, in red nucleus, in trigeminal mesencephalic, spinal and principal nuclei, in cochlear and trapezoid nuclei and in the dorsal tegemental nucleus.

It localises to the cell membrane. The catalysed reaction is Na(+)(in) = Na(+)(out). It carries out the reaction K(+)(in) = K(+)(out). The enzyme catalyses NH4(+)(in) = NH4(+)(out). Activated by cAMP, and at 10-100 times higher concentrations, also by cGMP. cAMP binding causes a conformation change that leads to the assembly of an active tetramer and channel opening. In the absence of cAMP, the C-terminal region is thought to exert a tonic inhibition on the pore when HCN2 is in a non-tetrameric form. Channel activity is modulated by intracellular chloride ions and pH; acidic pH shifts the activation to more negative voltages. Phosphatidylinositol-4,5- bisphosphate (PIP(2)) acts as a ligand that allosterically opens HCN2 by shifting voltage-dependent channel activation toward depolarized potentials. Inhibited by extracellular cesium ions. In terms of biological role, hyperpolarization-activated ion channel exhibiting weak selectivity for potassium over sodium ions. Contributes to the native pacemaker currents in heart (If) and in neurons (Ih). Can also transport ammonium in the distal nephron. Involved in the initiation of neuropathic pain in sensory neurons. Produces a large instantaneous current. This chain is Potassium/sodium hyperpolarization-activated cyclic nucleotide-gated channel 2 (Hcn2), found in Rattus norvegicus (Rat).